Consider the following 83-residue polypeptide: Sulfur carrier protein TusA (83 aa).

Cys-20 (cysteine persulfide intermediate) is an active-site residue.

This sequence belongs to the sulfur carrier protein TusA family.

The protein resides in the cytoplasm. Its function is as follows. Sulfur carrier protein which probably makes part of a sulfur-relay system. The protein is Sulfur carrier protein TusA of Pseudomonas fluorescens (strain SBW25).